The chain runs to 293 residues: Ethanolamine ammonia-lyase small subunit (293 aa).

Adenosylcob(III)alamin-binding residues include Val207 and Glu228.

Belongs to the EutC family. As to quaternary structure, the basic unit is a heterodimer which dimerizes to form tetramers. The heterotetramers trimerize; 6 large subunits form a core ring with 6 small subunits projecting outwards. It depends on adenosylcob(III)alamin as a cofactor.

The protein localises to the bacterial microcompartment. The catalysed reaction is ethanolamine = acetaldehyde + NH4(+). The protein operates within amine and polyamine degradation; ethanolamine degradation. In terms of biological role, catalyzes the deamination of various vicinal amino-alcohols to oxo compounds. Allows this organism to utilize ethanolamine as the sole source of nitrogen and carbon in the presence of external vitamin B12. In Listeria monocytogenes serotype 4b (strain CLIP80459), this protein is Ethanolamine ammonia-lyase small subunit.